A 587-amino-acid chain; its full sequence is Ankyrin repeat and SOCS box protein 14 (587 aa).

ANK repeat units follow at residues 82 to 112, 117 to 146, 150 to 179, 183 to 212, 216 to 245, 248 to 277, 281 to 310, 313 to 342, 355 to 384, 385 to 414, and 416 to 449; these read IGWIPLHKAAVQLNRKILEITLSASDPSLWE, NGETPLFLAVSSCLLENATFLLLNGCNPNA, EGNSPLLAAVLRDCYDMAALLINYGADVNL, NERTALHEAAKLGREDMVKLMLVSGAHPDP, YGFTPLALAAQSGHTEIMEMLLRKGKIFCL, DSSSILLEAASGGNPDAVALLLEYGADANI, SGHLPIHVAADRGHLLALKILIPVTDLAAI, SGISPVHCAAAGAHPQCLELLIQAGFDVNF, HRKSALYFAVSNSDLSSVKLLLSAGALPNQ, DPVNCLQIALRMGNYELISLLLRHGANVNY, and CRVNPLHFPSALQYTLKDEVMLRMLLNYGYDTER. Residues 521–576 form the SOCS box domain; the sequence is WSEIHFILTNPRSLKHLCRLKIRKCMGRLHLRCPVFMSFLPLPNRLKAYVLYKEYD.

Belongs to the ankyrin SOCS box (ASB) family. In terms of assembly, interacts with MAPRE2; this interaction promotes MAPRE2 degradation.

It functions in the pathway protein modification; protein ubiquitination. Its function is as follows. May be a substrate-recognition component of a SCF-like ECS (Elongin-Cullin-SOCS-box protein) E3 ubiquitin-protein ligase complex which mediates the ubiquitination and subsequent proteasomal degradation of target proteins. Plays a role in the inhibition of cardiomyocyte nuclear proliferation by mediating the ubiquitination and degradation of MAPRE2. This Homo sapiens (Human) protein is Ankyrin repeat and SOCS box protein 14 (ASB14).